A 105-amino-acid polypeptide reads, in one-letter code: Large ribosomal subunit protein uL24 (105 aa).

This sequence belongs to the universal ribosomal protein uL24 family. In terms of assembly, part of the 50S ribosomal subunit.

Its function is as follows. One of two assembly initiator proteins, it binds directly to the 5'-end of the 23S rRNA, where it nucleates assembly of the 50S subunit. Functionally, one of the proteins that surrounds the polypeptide exit tunnel on the outside of the subunit. The sequence is that of Large ribosomal subunit protein uL24 from Buchnera aphidicola subsp. Cinara cedri (strain Cc).